We begin with the raw amino-acid sequence, 177 residues long: Tail tube protein (177 aa).

Belongs to the T4-like viruses Gp19 protein family.

The protein localises to the virion. Its function is as follows. Structural component of the bacteriophage tail which consists of a contractile sheath, a tube and a baseplate. The central cylindrical segment of the tail consists of a rigid tube, composed of multiple copies of the tail tube protein. During infection, contraction of the sheath drives the central tube through the host outer membrane, creating a channel for DNA ejection from the capsid into the host cell. The polypeptide is Tail tube protein (Serratia marcescens (Serratia marcescens bacteriophage KSP90)).